The sequence spans 591 residues: Potassium-transporting ATPase potassium-binding subunit (591 aa).

Transmembrane regions (helical) follow at residues 6-26 (WFQI…LGVF), 63-83 (WTEY…MLYI), 137-157 (GLAY…IAFI), 179-199 (VLWV…SQGV), 272-292 (LSNL…TYTL), 303-323 (WAVW…VYWA), 405-425 (AGMY…GLMV), 444-464 (AMLV…ISSV), 510-530 (VAIG…MLAI), and 553-573 (LFSV…FFPA).

This sequence belongs to the KdpA family. The system is composed of three essential subunits: KdpA, KdpB and KdpC.

It localises to the cell inner membrane. Functionally, part of the high-affinity ATP-driven potassium transport (or Kdp) system, which catalyzes the hydrolysis of ATP coupled with the electrogenic transport of potassium into the cytoplasm. This subunit binds the periplasmic potassium ions and delivers the ions to the membrane domain of KdpB through an intramembrane tunnel. The polypeptide is Potassium-transporting ATPase potassium-binding subunit (Koribacter versatilis (strain Ellin345)).